The following is a 149-amino-acid chain: D-aminoacyl-tRNA deacylase (149 aa).

The short motif at 137–138 (GP) is the Gly-cisPro motif, important for rejection of L-amino acids element.

This sequence belongs to the DTD family. Homodimer.

It is found in the cytoplasm. It catalyses the reaction glycyl-tRNA(Ala) + H2O = tRNA(Ala) + glycine + H(+). The catalysed reaction is a D-aminoacyl-tRNA + H2O = a tRNA + a D-alpha-amino acid + H(+). In terms of biological role, an aminoacyl-tRNA editing enzyme that deacylates mischarged D-aminoacyl-tRNAs. Also deacylates mischarged glycyl-tRNA(Ala), protecting cells against glycine mischarging by AlaRS. Acts via tRNA-based rather than protein-based catalysis; rejects L-amino acids rather than detecting D-amino acids in the active site. By recycling D-aminoacyl-tRNA to D-amino acids and free tRNA molecules, this enzyme counteracts the toxicity associated with the formation of D-aminoacyl-tRNA entities in vivo and helps enforce protein L-homochirality. The sequence is that of D-aminoacyl-tRNA deacylase from Caldicellulosiruptor saccharolyticus (strain ATCC 43494 / DSM 8903 / Tp8T 6331).